The primary structure comprises 481 residues: F-box/LRR-repeat protein At3g03360 (481 aa).

The segment at 1-28 (MEKESQENSTRPDASSTVFSSSKSTCAS) is disordered. Low complexity predominate over residues 14–28 (ASSTVFSSSKSTCAS). The F-box domain occupies 36-84 (GDLISRLPDDILQLILSYLPTRLAIKTSVLSRRWRHVWSDTWSLSFHRD). 5 LRR repeats span residues 118 to 145 (SRPD…SLYL), 196 to 221 (HCNI…LLFF), 295 to 320 (EADF…TLGA), 350 to 375 (ISRY…TIHP), and 413 to 439 (RRNV…ELIV).

This chain is F-box/LRR-repeat protein At3g03360, found in Arabidopsis thaliana (Mouse-ear cress).